We begin with the raw amino-acid sequence, 210 residues long: Scoloptoxin SSD558 (210 aa).

A signal peptide spans 1–23 (MNILLPSTLFVLLMFQIIGSGMG).

Post-translationally, contains 3 disulfide bonds. Expressed by the venom gland.

The protein localises to the secreted. This Scolopendra dehaani (Thai centipede) protein is Scoloptoxin SSD558.